The sequence spans 371 residues: Ferrochelatase (371 aa).

Residues His-218 and Glu-299 each contribute to the Fe cation site.

The protein belongs to the ferrochelatase family.

The protein localises to the cytoplasm. The enzyme catalyses heme b + 2 H(+) = protoporphyrin IX + Fe(2+). The protein operates within porphyrin-containing compound metabolism; protoheme biosynthesis; protoheme from protoporphyrin-IX: step 1/1. Functionally, catalyzes the ferrous insertion into protoporphyrin IX. This is Ferrochelatase from Cupriavidus pinatubonensis (strain JMP 134 / LMG 1197) (Cupriavidus necator (strain JMP 134)).